The sequence spans 805 residues: Sucrose synthase (805 aa).

Residues 275 to 752 (MVFNVVILSP…GLQRIEEKYT (478 aa)) form a GT-B glycosyltransferase region.

It belongs to the glycosyltransferase 1 family. Plant sucrose synthase subfamily.

The enzyme catalyses an NDP-alpha-D-glucose + D-fructose = a ribonucleoside 5'-diphosphate + sucrose + H(+). Its function is as follows. Sucrose-cleaving enzyme that provides UDP-glucose and fructose for various metabolic pathways. The polypeptide is Sucrose synthase (Medicago sativa (Alfalfa)).